Reading from the N-terminus, the 320-residue chain is Putative protein FRMPD2-like (320 aa).

2 consecutive PDZ domains span residues 1–46 (MTSI…ERRV) and 90–178 (EVKL…CRPP). Residues 215-239 (DQEDSWRDSASPDAGEGLGLRPESS) are disordered.

The chain is Putative protein FRMPD2-like from Homo sapiens (Human).